A 296-amino-acid polypeptide reads, in one-letter code: NAD kinase (296 aa).

Asp-78 serves as the catalytic Proton acceptor. NAD(+)-binding positions include 78-79, 152-153, Arg-180, Asp-182, and Gln-251; these read DG and ND.

It belongs to the NAD kinase family. Requires a divalent metal cation as cofactor.

The protein resides in the cytoplasm. It catalyses the reaction NAD(+) + ATP = ADP + NADP(+) + H(+). Functionally, involved in the regulation of the intracellular balance of NAD and NADP, and is a key enzyme in the biosynthesis of NADP. Catalyzes specifically the phosphorylation on 2'-hydroxyl of the adenosine moiety of NAD to yield NADP. This chain is NAD kinase, found in Neisseria gonorrhoeae (strain ATCC 700825 / FA 1090).